A 152-amino-acid polypeptide reads, in one-letter code: MSRLPVLLLLQLLVRPGLQAPMTQTTSLKTSWVNCSNMIDEIITHLKQPPLPLLDFNNLNGEDQDILMENNLRRPNLEAFNRAVKSLQNASAIESILKNLLPCLPLATAAPTRHPIRIKDGDWNEFRRKLTFYLKTLENAQAQQTTLSLAIF.

The signal sequence occupies residues 1–19; sequence MSRLPVLLLLQLLVRPGLQ. N34 and N89 each carry an N-linked (GlcNAc...) asparagine glycan. The cysteines at positions 35 and 103 are disulfide-linked.

The protein belongs to the IL-3 family. In terms of assembly, monomer. Activated T-cells, mast cells, natural killer cells.

The protein resides in the secreted. Functionally, granulocyte/macrophage colony-stimulating factors are cytokines that act in hematopoiesis by controlling the production, differentiation, and function of 2 related white cell populations of the blood, the granulocytes and the monocytes-macrophages. In terms of biological role, this CSF induces granulocytes, macrophages, mast cells, stem cells, erythroid cells, eosinophils and megakaryocytes. This Pan troglodytes (Chimpanzee) protein is Interleukin-3 (IL3).